The sequence spans 213 residues: Imidazole glycerol phosphate synthase subunit HisH (213 aa).

A Glutamine amidotransferase type-1 domain is found at 3–213 (MIGVIDYGMG…VGIVTGRENG (211 aa)). Residue cysteine 81 is the Nucleophile of the active site. Residues histidine 188 and glutamate 190 contribute to the active site.

Heterodimer of HisH and HisF.

It localises to the cytoplasm. The catalysed reaction is 5-[(5-phospho-1-deoxy-D-ribulos-1-ylimino)methylamino]-1-(5-phospho-beta-D-ribosyl)imidazole-4-carboxamide + L-glutamine = D-erythro-1-(imidazol-4-yl)glycerol 3-phosphate + 5-amino-1-(5-phospho-beta-D-ribosyl)imidazole-4-carboxamide + L-glutamate + H(+). It carries out the reaction L-glutamine + H2O = L-glutamate + NH4(+). Its pathway is amino-acid biosynthesis; L-histidine biosynthesis; L-histidine from 5-phospho-alpha-D-ribose 1-diphosphate: step 5/9. In terms of biological role, IGPS catalyzes the conversion of PRFAR and glutamine to IGP, AICAR and glutamate. The HisH subunit catalyzes the hydrolysis of glutamine to glutamate and ammonia as part of the synthesis of IGP and AICAR. The resulting ammonia molecule is channeled to the active site of HisF. This is Imidazole glycerol phosphate synthase subunit HisH from Geobacillus thermodenitrificans (strain NG80-2).